Here is a 913-residue protein sequence, read N- to C-terminus: Eukaryotic translation initiation factor 3 subunit C (913 aa).

The tract at residues 1–31 (MSRFFANGSDSESESSEEEVQASNFNKANNF) is disordered. Residues 11 to 20 (SESESSEEEV) show a composition bias toward acidic residues. Polar residues predominate over residues 21–31 (QASNFNKANNF). Phosphoserine is present on residues serine 34, serine 165, serine 177, and serine 186. 2 disordered regions span residues 157 to 195 (FREAPDQESDVDEGEGEAHDSDAERAGADSDGGIGAGTG) and 208 to 285 (PTKV…EDGE). Acidic residues predominate over residues 162–171 (DQESDVDEGE). Residues 172-184 (GEAHDSDAERAGA) are compositionally biased toward basic and acidic residues. Over residues 214 to 239 (DEDDSDDSIDWDSDTESETESSEDEN) the composition is skewed to acidic residues. Residues 244–263 (MRERFLKRTTEKEDKDDDKR) are compositionally biased toward basic and acidic residues. Positions 264-276 (KDKRKEQKHKVRK) are enriched in basic residues. Residues 645 to 821 (FHMHINLELL…ETVVMHRSEP (177 aa)) enclose the PCI domain. The segment at 856–913 (RGNMGNRDRGYNRNQNNQGGNWGGQRRDNRNQRNRNQRGHHKQQQQQQQQQVQTIEEE) is disordered. The segment covering 887–898 (QRNRNQRGHHKQ) has biased composition (basic residues).

Belongs to the eIF-3 subunit C family. As to quaternary structure, component of the eukaryotic translation initiation factor 3 (eIF-3) complex. The eIF-3 complex interacts with pix.

It is found in the cytoplasm. Component of the eukaryotic translation initiation factor 3 (eIF-3) complex, which is involved in protein synthesis of a specialized repertoire of mRNAs and, together with other initiation factors, stimulates binding of mRNA and methionyl-tRNAi to the 40S ribosome. The eIF-3 complex specifically targets and initiates translation of a subset of mRNAs involved in cell proliferation. This Drosophila virilis (Fruit fly) protein is Eukaryotic translation initiation factor 3 subunit C.